Here is a 154-residue protein sequence, read N- to C-terminus: Putative protein heh-1 (154 aa).

Residues 1–15 (MKTVIFLALLGLAAA) form the signal peptide. 2 disulfides stabilise this stretch: Cys39-Cys50 and Cys97-Cys103.

This sequence belongs to the NPC2 family.

It localises to the secreted. This chain is Putative protein heh-1 (heh-1), found in Caenorhabditis elegans.